A 481-amino-acid chain; its full sequence is Cobyric acid synthase (481 aa).

The GATase cobBQ-type domain maps to 249–436 (GLHIVCLRLS…LHGMFRDDAF (188 aa)). The active-site Nucleophile is the C331. H428 is an active-site residue.

The protein belongs to the CobB/CobQ family. CobQ subfamily.

It functions in the pathway cofactor biosynthesis; adenosylcobalamin biosynthesis. Catalyzes amidations at positions B, D, E, and G on adenosylcobyrinic A,C-diamide. NH(2) groups are provided by glutamine, and one molecule of ATP is hydrogenolyzed for each amidation. This chain is Cobyric acid synthase, found in Jannaschia sp. (strain CCS1).